Here is a 169-residue protein sequence, read N- to C-terminus: Cell cycle link protein (169 aa).

The tract at residues 9–22 is binding to host SKP1 protein; it reads LPEELREKIVHDHL. The short motif at 110 to 114 is the LXCXE motif, interaction with host RBR element; that stretch reads LSCRE.

This sequence belongs to the nanovirus Clink protein family. In terms of assembly, interacts with host SKP1. Interacts (via LXCXE domain) with host retinoblastoma-related protein 1 (RBR1). Interacts (via LXCXE domain) with retinoblastoma-related proteins (RBR).

In terms of biological role, interacts with and disrupts the function of host retinoblastoma-related proteins RBR, which are key regulators of the cell cycle. Induces transcriptional activation of E2F-regulated S-phase and G2/M-phase-specific genes. Inactivation of the ability of RBR to arrest the cell cycle leads to the stimulation of viral DNA replication. This chain is Cell cycle link protein (DNA-C), found in Faba bean necrotic yellows virus (isolate Egyptian EV1-93) (FBNYV).